The sequence spans 79 residues: DNA-directed RNA polymerase subunit omega (79 aa).

It belongs to the RNA polymerase subunit omega family. In terms of assembly, the RNAP catalytic core consists of 2 alpha, 1 beta, 1 beta' and 1 omega subunit. When a sigma factor is associated with the core the holoenzyme is formed, which can initiate transcription.

The enzyme catalyses RNA(n) + a ribonucleoside 5'-triphosphate = RNA(n+1) + diphosphate. Promotes RNA polymerase assembly. Latches the N- and C-terminal regions of the beta' subunit thereby facilitating its interaction with the beta and alpha subunits. The protein is DNA-directed RNA polymerase subunit omega of Thermotoga neapolitana (strain ATCC 49049 / DSM 4359 / NBRC 107923 / NS-E).